Reading from the N-terminus, the 231-residue chain is UPF0758 protein RBAM_025090 (231 aa).

The region spanning 109–231 (VIRSPEDGAK…FVSLKEKGYL (123 aa)) is the MPN domain. Zn(2+) is bound by residues His-180, His-182, and Asp-193. A JAMM motif motif is present at residues 180–193 (HNHPSGDPTPSRED).

Belongs to the UPF0758 family.

This is UPF0758 protein RBAM_025090 from Bacillus velezensis (strain DSM 23117 / BGSC 10A6 / LMG 26770 / FZB42) (Bacillus amyloliquefaciens subsp. plantarum).